Consider the following 406-residue polypeptide: LIM/homeobox protein Lhx1 (406 aa).

LIM zinc-binding domains follow at residues 4 to 54 (CAGC…CKND) and 63 to 117 (CAGC…CKED). Disordered regions lie at residues 128–189 (NSLH…TIKA) and 293–374 (YDFF…EVFG). Over residues 137–148 (SDPSLSPDSQDP) the composition is skewed to low complexity. Residues 151 to 167 (DDAKDSESANVSDKEGG) show a composition bias toward basic and acidic residues. The residue at position 162 (S162) is a Phosphoserine. The segment at residues 180–239 (RRGPRTTIKAKQLETLKAAFAATPKPTRHIREQLAQETGLNMRVIQVWFQNRRSKERRMK) is a DNA-binding region (homeobox). Residues 315 to 327 (PSSGPSGTPLGGL) are compositionally biased toward low complexity. The segment covering 352 to 362 (GDSPSPEPSLP) has biased composition (pro residues).

As to quaternary structure, interacts with LDB1 via the tandem LIM domains.

The protein localises to the nucleus. In terms of biological role, potential transcription factor. May play a role in early mesoderm formation and later in lateral mesoderm differentiation and neurogenesis. The sequence is that of LIM/homeobox protein Lhx1 (LHX1) from Saimiri boliviensis boliviensis (Bolivian squirrel monkey).